The sequence spans 877 residues: Putative ankyrin repeat protein R748 (877 aa).

ANK repeat units lie at residues 44 to 74 (IRHICLTGSYNNNQMSIMKILMNKFPKTINV), 79 to 109 (QNNTYLHQSIFNRHKIFVDFFMNELNDNINY), 115 to 145 (IGISHLHALVNYGYIDHIETAIIKDPGAIQQ), 202 to 231 (MGYRAIECAVRYCSTDVIDELISLGFSINE), 243 to 272 (NNNDLIGFATQIDRLDMVKHLINIGAPIHM), and 282 to 311 (LVPTCLVVAIKFKRDQCIHYLLNLPESIQA). The interval 525–579 (DSDEDPVCDSNESDNSNDINNHVKSDNKLNSSNDYYDEDDSEDNYNNQSDDEPLV) is disordered. Positions 533 to 544 (DSNESDNSNDIN) are enriched in low complexity.

The protein is Putative ankyrin repeat protein R748 of Acanthamoeba polyphaga mimivirus (APMV).